We begin with the raw amino-acid sequence, 305 residues long: Ornithine carbamoyltransferase (305 aa).

Carbamoyl phosphate is bound by residues 52–55 (STRT), glutamine 79, arginine 103, and 130–133 (HPCQ). L-ornithine is bound by residues asparagine 161, aspartate 221, and 225-226 (SM). Carbamoyl phosphate contacts are provided by residues 261 to 262 (CL) and arginine 289.

Belongs to the aspartate/ornithine carbamoyltransferase superfamily. OTCase family.

The protein resides in the cytoplasm. It catalyses the reaction carbamoyl phosphate + L-ornithine = L-citrulline + phosphate + H(+). The protein operates within amino-acid biosynthesis; L-arginine biosynthesis; L-arginine from L-ornithine and carbamoyl phosphate: step 1/3. Its function is as follows. Reversibly catalyzes the transfer of the carbamoyl group from carbamoyl phosphate (CP) to the N(epsilon) atom of ornithine (ORN) to produce L-citrulline. This Methanocorpusculum labreanum (strain ATCC 43576 / DSM 4855 / Z) protein is Ornithine carbamoyltransferase.